Reading from the N-terminus, the 61-residue chain is Small ribosomal subunit protein uS14 (61 aa).

Cys-24, Cys-27, Cys-40, and Cys-43 together coordinate Zn(2+).

Belongs to the universal ribosomal protein uS14 family. Zinc-binding uS14 subfamily. In terms of assembly, part of the 30S ribosomal subunit. Contacts proteins S3 and S10. Zn(2+) is required as a cofactor.

Binds 16S rRNA, required for the assembly of 30S particles and may also be responsible for determining the conformation of the 16S rRNA at the A site. The polypeptide is Small ribosomal subunit protein uS14 (Caldanaerobacter subterraneus subsp. tengcongensis (strain DSM 15242 / JCM 11007 / NBRC 100824 / MB4) (Thermoanaerobacter tengcongensis)).